A 229-amino-acid chain; its full sequence is Peroxiredoxin-like 2A (229 aa).

Positions 14–112 (MWSIGAGALG…DQLGVPLYAV (99 aa)) are thioredoxin fold. Residues C85 and C88 each act as redox-active in the active site.

The protein belongs to the peroxiredoxin-like PRXL2 family. PRXL2A subfamily. In terms of tissue distribution, expressed in CSF1 and TNFSF11-stimulated CD14(+) peripheral blood mononuclear cells (PBMCs).

Its subcellular location is the cytoplasm. The protein resides in the secreted. Functionally, involved in redox regulation of the cell. Acts as an antioxidant. Inhibits TNFSF11-induced NFKB1 and JUN activation and osteoclast differentiation. May affect bone resorption and help to maintain bone mass. Acts as a negative regulator of macrophage-mediated inflammation by inhibiting macrophage production of inflammatory cytokines, probably through suppression of the MAPK signaling pathway. In Homo sapiens (Human), this protein is Peroxiredoxin-like 2A.